Here is a 239-residue protein sequence, read N- to C-terminus: Fatty acid metabolism regulator protein (239 aa).

In terms of domain architecture, HTH gntR-type spans 6-74 (QSPAGFAEEY…HGKPTKVNNF (69 aa)). A DNA-binding region (H-T-H motif) is located at residues 34 to 53 (ERELSELIGVTRTTLREVLQ).

In terms of assembly, homodimer.

Its subcellular location is the cytoplasm. In terms of biological role, multifunctional regulator of fatty acid metabolism. This Yersinia pseudotuberculosis serotype O:1b (strain IP 31758) protein is Fatty acid metabolism regulator protein.